A 57-amino-acid chain; its full sequence is Ribosome modulation factor 2 (57 aa).

The tract at residues 1-24 (MKRQKRDKLGRAHSNGYQAGLGGK) is disordered.

It belongs to the ribosome modulation factor family.

The protein resides in the cytoplasm. Functionally, during stationary phase, converts 70S ribosomes to an inactive dimeric form (100S ribosomes). The polypeptide is Ribosome modulation factor 2 (Colwellia psychrerythraea (strain 34H / ATCC BAA-681) (Vibrio psychroerythus)).